We begin with the raw amino-acid sequence, 427 residues long: Pectin acetylesterase 5 (427 aa).

The first 35 residues, 1-35 (MAIPRFSSLLRCRKWAKSDWLVASIGCVLIVFFLS), serve as a signal peptide directing secretion. N-linked (GlcNAc...) asparagine glycosylation is present at Asn-173. Catalysis depends on charge relay system residues Ser-209, Asp-305, and His-372. A glycan (N-linked (GlcNAc...) asparagine) is linked at Asn-391.

Belongs to the pectinacetylesterase family.

It localises to the secreted. Its subcellular location is the cell wall. In terms of biological role, hydrolyzes acetyl esters in homogalacturonan regions of pectin. In type I primary cell wall, galacturonic acid residues of pectin can be acetylated at the O-2 and O-3 positions. Decreasing the degree of acetylation of pectin gels in vitro alters their physical properties. This Arabidopsis thaliana (Mouse-ear cress) protein is Pectin acetylesterase 5.